Reading from the N-terminus, the 72-residue chain is Small ribosomal subunit protein bS20 (72 aa).

The protein belongs to the bacterial ribosomal protein bS20 family.

Functionally, binds directly to 16S ribosomal RNA. This chain is Small ribosomal subunit protein bS20 (rpsT), found in Aeromonas hydrophila.